We begin with the raw amino-acid sequence, 98 residues long: NADH-ubiquinone oxidoreductase chain 4L (98 aa).

3 helical membrane-spanning segments follow: residues 1–21, 30–50, and 61–81; these read MSLT…GLLM, LLCL…TILI, and IILL…LVAV.

It belongs to the complex I subunit 4L family. In terms of assembly, core subunit of respiratory chain NADH dehydrogenase (Complex I) which is composed of 45 different subunits.

It localises to the mitochondrion inner membrane. The catalysed reaction is a ubiquinone + NADH + 5 H(+)(in) = a ubiquinol + NAD(+) + 4 H(+)(out). Core subunit of the mitochondrial membrane respiratory chain NADH dehydrogenase (Complex I) which catalyzes electron transfer from NADH through the respiratory chain, using ubiquinone as an electron acceptor. Part of the enzyme membrane arm which is embedded in the lipid bilayer and involved in proton translocation. The sequence is that of NADH-ubiquinone oxidoreductase chain 4L (MT-ND4L) from Pipistrellus abramus (Japanese pipistrelle).